Reading from the N-terminus, the 230-residue chain is PKHD-type hydroxylase Xfasm12_1709 (230 aa).

The Fe2OG dioxygenase domain maps to 78–182 (RTLPPRFNRY…RIASFFWVQS (105 aa)). Fe cation-binding residues include His96, Asp98, and His163. Arg173 is a binding site for 2-oxoglutarate.

Requires Fe(2+) as cofactor. L-ascorbate serves as cofactor.

This is PKHD-type hydroxylase Xfasm12_1709 from Xylella fastidiosa (strain M12).